The following is a 154-amino-acid chain: Protein X (154 aa).

The tract at residues 68-117 (PCALRFTSARRMETTVNTHMILPKVLHKRTLGLPAMSTIDLEAYFKDCLF) is mitochondrial targeting sequence.

This sequence belongs to the orthohepadnavirus protein X family. As to quaternary structure, may form homodimer. May interact with host CEBPA, CFLAR, CREB1, DDB1, E4F1, HBXIP, HSPD1/HSP60, NFKBIA, POLR2E and SMAD4. Interacts with host SMC5-SMC6 complex and induces its degradation. Interacts with host TRPC4AP; leading to prevent ubiquitination of TRPC4AP. Interacts with host PLSCR1; this interaction promotes ubiquitination and degradation of HBx and impairs HBx-mediated cell proliferation. A fraction may be phosphorylated in insect cells and HepG2 cells, a human hepatoblastoma cell line. Phosphorylated in vitro by host protein kinase C or mitogen-activated protein kinase. N-acetylated in insect cells.

It is found in the host cytoplasm. Its subcellular location is the host nucleus. The protein resides in the host mitochondrion. Its function is as follows. Multifunctional protein that plays a role in silencing host antiviral defenses and promoting viral transcription. Does not seem to be essential for HBV infection. May be directly involved in development of cirrhosis and liver cancer (hepatocellular carcinoma). Most of cytosolic activities involve modulation of cytosolic calcium. The effect on apoptosis is controversial depending on the cell types in which the studies have been conducted. May induce apoptosis by localizing in mitochondria and causing loss of mitochondrial membrane potential. May also modulate apoptosis by binding host CFLAR, a key regulator of the death-inducing signaling complex (DISC). Promotes viral transcription by using the host E3 ubiquitin ligase DDB1 to target the SMC5-SMC6 complex to proteasomal degradation. This host complex would otherwise bind to viral episomal DNA, and prevents its transcription. Moderately stimulates transcription of many different viral and cellular transcription elements. Promoters and enhancers stimulated by HBx contain DNA binding sites for NF-kappa-B, AP-1, AP-2, c-EBP, ATF/CREB, or the calcium-activated factor NF-AT. This is Protein X from Hepatitis B virus genotype C subtype ayw (isolate Australia/AustRC/1992) (HBV-C).